A 116-amino-acid chain; its full sequence is T cell receptor alpha variable 38-1 (116 aa).

Residues 1-21 (MTRVSLLWAVVVSTCLESGMA) form the signal peptide. The 95-residue stretch at 22–116 (QTVTQSQPEM…TAMYFCAFMK (95 aa)) folds into the Ig-like domain. Cysteines 43 and 112 form a disulfide. A glycan (N-linked (GlcNAc...) asparagine) is linked at asparagine 78.

Alpha-beta TR is a heterodimer composed of an alpha and beta chain; disulfide-linked. The alpha-beta TR is associated with the transmembrane signaling CD3 coreceptor proteins to form the TR-CD3 (TcR or TCR). The assembly of alpha-beta TR heterodimers with CD3 occurs in the endoplasmic reticulum where a single alpha-beta TR heterodimer associates with one CD3D-CD3E heterodimer, one CD3G-CD3E heterodimer and one CD247 homodimer forming a stable octameric structure. CD3D-CD3E and CD3G-CD3E heterodimers preferentially associate with TR alpha and TR beta chains, respectively. The association of the CD247 homodimer is the last step of TcR assembly in the endoplasmic reticulum and is required for transport to the cell surface.

Its subcellular location is the cell membrane. V region of the variable domain of T cell receptor (TR) alpha chain that participates in the antigen recognition. Alpha-beta T cell receptors are antigen specific receptors which are essential to the immune response and are present on the cell surface of T lymphocytes. Recognize peptide-major histocompatibility (MH) (pMH) complexes that are displayed by antigen presenting cells (APC), a prerequisite for efficient T cell adaptive immunity against pathogens. Binding of alpha-beta TR to pMH complex initiates TR-CD3 clustering on the cell surface and intracellular activation of LCK that phosphorylates the ITAM motifs of CD3G, CD3D, CD3E and CD247 enabling the recruitment of ZAP70. In turn ZAP70 phosphorylates LAT, which recruits numerous signaling molecules to form the LAT signalosome. The LAT signalosome propagates signal branching to three major signaling pathways, the calcium, the mitogen-activated protein kinase (MAPK) kinase and the nuclear factor NF-kappa-B (NF-kB) pathways, leading to the mobilization of transcription factors that are critical for gene expression and essential for T cell growth and differentiation. The T cell repertoire is generated in the thymus, by V-(D)-J rearrangement. This repertoire is then shaped by intrathymic selection events to generate a peripheral T cell pool of self-MH restricted, non-autoaggressive T cells. Post-thymic interaction of alpha-beta TR with the pMH complexes shapes TR structural and functional avidity. In Homo sapiens (Human), this protein is T cell receptor alpha variable 38-1.